Reading from the N-terminus, the 327-residue chain is o-succinylbenzoate synthase (327 aa).

Lys110 serves as the catalytic Proton donor. Asp138, Glu165, and Asp188 together coordinate Mg(2+). Residue Lys212 is the Proton acceptor of the active site.

Belongs to the mandelate racemase/muconate lactonizing enzyme family. MenC type 1 subfamily. A divalent metal cation is required as a cofactor.

The catalysed reaction is (1R,6R)-6-hydroxy-2-succinyl-cyclohexa-2,4-diene-1-carboxylate = 2-succinylbenzoate + H2O. It functions in the pathway quinol/quinone metabolism; 1,4-dihydroxy-2-naphthoate biosynthesis; 1,4-dihydroxy-2-naphthoate from chorismate: step 4/7. It participates in quinol/quinone metabolism; menaquinone biosynthesis. Its function is as follows. Converts 2-succinyl-6-hydroxy-2,4-cyclohexadiene-1-carboxylate (SHCHC) to 2-succinylbenzoate (OSB). The polypeptide is o-succinylbenzoate synthase (Mycobacterium marinum (strain ATCC BAA-535 / M)).